The following is a 520-amino-acid chain: Serine protease Hip1 (520 aa).

The first 30 residues, 1-30 (MGMRLSRRDKIARMLLIWAALAAVALVLVG), serve as a signal peptide directing secretion. Cys-31 is lipidated: N-palmitoyl cysteine. Cys-31 carries the S-diacylglycerol cysteine lipid modification. In terms of domain architecture, AB hydrolase-1 spans 102–497 (GSLVINPGGP…TQHTVVFQGD (396 aa)). Ser-228 (nucleophile) is an active-site residue. The active site involves Asp-463. Residue His-490 is the Proton donor of the active site.

Belongs to the peptidase S33 family.

The protein resides in the cell envelope. It is found in the cell membrane. Serine protease that promotes pathogenesis by promoting the processing and the extracellular release of the M.bovis heat-shock protein GroEL2. Functionally, key immunomodulatory virulence factor, which promotes survival in host macrophages and modulates host immune responses. The sequence is that of Serine protease Hip1 from Mycobacterium bovis (strain ATCC BAA-935 / AF2122/97).